The following is a 254-amino-acid chain: Thiazole synthase (254 aa).

The active-site Schiff-base intermediate with DXP is lysine 95. 1-deoxy-D-xylulose 5-phosphate contacts are provided by residues glycine 156, 182–183 (AG), and 204–205 (NT).

Belongs to the ThiG family. As to quaternary structure, homotetramer. Forms heterodimers with either ThiH or ThiS.

The protein localises to the cytoplasm. The enzyme catalyses [ThiS sulfur-carrier protein]-C-terminal-Gly-aminoethanethioate + 2-iminoacetate + 1-deoxy-D-xylulose 5-phosphate = [ThiS sulfur-carrier protein]-C-terminal Gly-Gly + 2-[(2R,5Z)-2-carboxy-4-methylthiazol-5(2H)-ylidene]ethyl phosphate + 2 H2O + H(+). It participates in cofactor biosynthesis; thiamine diphosphate biosynthesis. Functionally, catalyzes the rearrangement of 1-deoxy-D-xylulose 5-phosphate (DXP) to produce the thiazole phosphate moiety of thiamine. Sulfur is provided by the thiocarboxylate moiety of the carrier protein ThiS. In vitro, sulfur can be provided by H(2)S. The sequence is that of Thiazole synthase from Shewanella sediminis (strain HAW-EB3).